The following is a 385-amino-acid chain: Mannitol-1-phosphate 5-dehydrogenase (385 aa).

3 to 14 provides a ligand contact to NAD(+); the sequence is DVHFGAGNIGRG.

This sequence belongs to the mannitol dehydrogenase family.

It carries out the reaction D-mannitol 1-phosphate + NAD(+) = beta-D-fructose 6-phosphate + NADH + H(+). This Lactiplantibacillus plantarum (strain ATCC BAA-793 / NCIMB 8826 / WCFS1) (Lactobacillus plantarum) protein is Mannitol-1-phosphate 5-dehydrogenase.